The primary structure comprises 139 residues: MARRQRKAIKSEINIVPFLDVLLVLVLIFMATAPIISQSVQVELPDSVQSQEVSNEDKVPVILEVAGIGKYAISIGGERQEGLTEEMVTQLSRQEFDKDNNTLFLVGGAKEVPYEEVIKALNLLHLAGIKSVGLMTNPI.

Residues 15 to 35 (IVPFLDVLLVLVLIFMATAPI) traverse the membrane as a helical segment.

The protein belongs to the ExbD/TolR family. The Tol-Pal system is composed of five core proteins: the inner membrane proteins TolA, TolQ and TolR, the periplasmic protein TolB and the outer membrane protein Pal. They form a network linking the inner and outer membranes and the peptidoglycan layer.

The protein localises to the cell inner membrane. In terms of biological role, part of the Tol-Pal system, which plays a role in outer membrane invagination during cell division and is important for maintaining outer membrane integrity. This is Tol-Pal system protein TolR from Haemophilus influenzae (strain ATCC 51907 / DSM 11121 / KW20 / Rd).